Here is a 143-residue protein sequence, read N- to C-terminus: Transcriptional regulator MraZ (143 aa).

2 SpoVT-AbrB domains span residues 5 to 47 (EYQH…PQDE) and 76 to 119 (ATEC…SKER).

This sequence belongs to the MraZ family. As to quaternary structure, forms oligomers.

It is found in the cytoplasm. Its subcellular location is the nucleoid. The polypeptide is Transcriptional regulator MraZ (Brevibacillus brevis (strain 47 / JCM 6285 / NBRC 100599)).